A 428-amino-acid polypeptide reads, in one-letter code: GTPase Obg (428 aa).

The 158-residue stretch at 1 to 158 folds into the Obg domain; that stretch reads MFVDQVQVEV…RFIKLELKVL (158 aa). The 175-residue stretch at 159-333 folds into the OBG-type G domain; that stretch reads ADVGLVGFPS…LMHKTAEVLK (175 aa). Residues 165–172, 190–194, 212–215, 282–285, and 314–316 each bind GTP; these read GFPSVGKS, FTTLV, DLPG, TKMD, and SSL. Mg(2+) is bound by residues Ser172 and Thr192. Positions 350-428 constitute an OCT domain; sequence YKYQPEPALK…IDDFTFEFVE (79 aa).

It belongs to the TRAFAC class OBG-HflX-like GTPase superfamily. OBG GTPase family. As to quaternary structure, monomer. Mg(2+) is required as a cofactor.

It is found in the cytoplasm. In terms of biological role, an essential GTPase which binds GTP, GDP and possibly (p)ppGpp with moderate affinity, with high nucleotide exchange rates and a fairly low GTP hydrolysis rate. Plays a role in control of the cell cycle, stress response, ribosome biogenesis and in those bacteria that undergo differentiation, in morphogenesis control. The sequence is that of GTPase Obg from Lacticaseibacillus paracasei (strain ATCC 334 / BCRC 17002 / CCUG 31169 / CIP 107868 / KCTC 3260 / NRRL B-441) (Lactobacillus paracasei).